The sequence spans 47 residues: PhoP/PhoQ regulator MgrB (47 aa).

Residues 6–26 traverse the membrane as a helical segment; sequence WLVLIVVVLACLVLWAQVINI.

It belongs to the MgrB family. May form homooligomers. Probably interacts with the periplasmic domain of PhoQ.

The protein resides in the cell inner membrane. In terms of biological role, phoP-regulated transcription is redox-sensitive, being activated when the periplasm becomes more reducing. MgrB acts between DsbA/DsbB and PhoP/PhoQ in this pathway. Represses PhoP/PhoQ signaling, possibly by binding to the periplasmic domain of PhoQ, altering its activity and that of downstream effector PhoP. The sequence is that of PhoP/PhoQ regulator MgrB from Escherichia fergusonii (strain ATCC 35469 / DSM 13698 / CCUG 18766 / IAM 14443 / JCM 21226 / LMG 7866 / NBRC 102419 / NCTC 12128 / CDC 0568-73).